The following is a 1628-amino-acid chain: Centrosomal protein of 170 kDa protein B (1628 aa).

Positions 23–73 (IFVGREDCELMLQSRSVDKQHAVINYDSDKDEHRVKDLGSLNGTFVNDVRI) constitute an FHA domain. Disordered regions lie at residues 136-201 (EHGA…DMTQ), 329-369 (LIRR…SEDP), 415-504 (PRKK…GKNY), 566-586 (SDVR…DAGT), 637-659 (LASE…KLSN), 719-739 (EHQG…LPQL), 758-842 (ESQR…KKST), 1005-1084 (VSLV…LDFT), 1100-1341 (TVSS…EDEQ), 1379-1405 (AGDG…TPAS), 1443-1463 (GSTG…DPSK), and 1560-1628 (HLDV…TYIV). Composition is skewed to basic and acidic residues over residues 147-156 (KQDKADKKAT) and 180-201 (KLDK…DMTQ). Polar residues predominate over residues 421 to 434 (QSFTHNANSPQNDT). Basic and acidic residues predominate over residues 436–453 (PVLKAKAEKRKGTLHVEK). Residues 454–479 (VSTNGMGSTAPASKSLSSPSFPQRSN) show a composition bias toward polar residues. Over residues 481-490 (FRREKTEDRI) the composition is skewed to basic and acidic residues. Composition is skewed to basic and acidic residues over residues 758 to 773 (ESQR…RISE) and 817 to 828 (WKGEESHSREPS). Polar residues predominate over residues 1005–1023 (VSLVSDKNVPSHSQKNRIV). Residues 1045-1056 (ARERLSEKRRTV) show a composition bias toward basic and acidic residues. Polar residues predominate over residues 1129-1150 (RSSNAQKVQQALTRSNSLSTPR). Over residues 1176 to 1193 (SNISPGTSSANSSSAKSS) the composition is skewed to low complexity. Over residues 1216–1227 (NVPSDSETTSSV) the composition is skewed to polar residues. 3 stretches are compositionally biased toward low complexity: residues 1261–1280 (TQKQ…SSST), 1312–1328 (ASTA…SRRQ), and 1381–1398 (DGDS…SISS). Over residues 1564-1596 (PSSNKKTSSTILTSNPLSRTTNNSAARTESQTP) the composition is skewed to polar residues. A compositionally biased stretch (low complexity) spans 1606 to 1618 (SSSSSSRSPGSSF).

The protein belongs to the CEP170 family.

The protein localises to the cytoplasm. The protein resides in the cytoskeleton. Functionally, plays a role in microtubule organization. This is Centrosomal protein of 170 kDa protein B (cep170b) from Xenopus tropicalis (Western clawed frog).